A 397-amino-acid chain; its full sequence is HTH-type transcriptional regulator GalR (397 aa).

HTH lysR-type domains are found at residues 7–64 and 99–156; these read PNLM…MRLT and FQAR…LQPT. DNA-binding regions (H-T-H motif) lie at residues 24 to 43 and 116 to 135; these read VSRA…RAIA and MQTV…AALK.

It belongs to the LysR transcriptional regulatory family.

Functionally, transcriptional regulator for the galBCD and galTAP operons, encoding genes of the gallate degradation pathway. The sequence is that of HTH-type transcriptional regulator GalR (galR) from Pseudomonas putida (strain ATCC 47054 / DSM 6125 / CFBP 8728 / NCIMB 11950 / KT2440).